The sequence spans 1037 residues: Sodium/potassium exporting P-type ATPase cta3 (1037 aa).

The Cytoplasmic segment spans residues 1–61; it reads MVTINISNPV…GVSAWKVLLR (61 aa). Residues 62–82 form a helical membrane-spanning segment; that stretch reads QVLNAMCVVLILAAALSFGTT. Asp-83 is a topological domain (extracellular). The chain crosses the membrane as a helical span at residues 84–104; that stretch reads WIEGGVISAIIVLNITVGFIQ. Residues 105-281 lie on the Cytoplasmic side of the membrane; sequence EYKAEKTMDS…LNVGTPLQRK (177 aa). Residues 282–302 form a helical membrane-spanning segment; the sequence is LTVLAYILFCIAIILAIIVMA. Residues 303 to 313 lie on the Extracellular side of the membrane; sequence AHSFHVTNEVS. The chain crosses the membrane as a helical span at residues 314–334; the sequence is IYAISLGISIIPESLIAVLSI. The Cytoplasmic portion of the chain corresponds to 335–760; the sequence is TMAMGQKNMS…GRRMFDNIMR (426 aa). The 4-aspartylphosphate intermediate role is filled by Asp-368. Asp-368 and Thr-370 together coordinate Mg(2+). 9 residues coordinate ATP: Thr-370, Glu-468, Lys-520, Arg-559, Thr-620, Gly-621, Asp-622, Arg-678, and Lys-684. Asp-703 serves as a coordination point for Mg(2+). Residue Asn-706 participates in ATP binding. Residues 761 to 781 traverse the membrane as a helical segment; the sequence is FVLHLLVSNVGEVILLVVGLA. Residues 782–787 are Extracellular-facing; the sequence is FRDEVH. A helical transmembrane segment spans residues 788–808; that stretch reads LSVFPMSPVEILWCNMITSSF. Residues 809-844 are Cytoplasmic-facing; it reads PSMGLGMELAQPDVMERLPHDNKVGIFQKSLIVDMM. The helical transmembrane segment at 845–865 threads the bilayer; sequence VYGFFLGVVSLMTWVVIMYGF. At 866–889 the chain is on the extracellular side; that stretch reads GTGNLSYDCNAHYHAGCNDVFKAR. N-linked (GlcNAc...) asparagine glycosylation occurs at Asn-869. A helical membrane pass occupies residues 890–910; the sequence is SAVFAVVTFCILIMAVEVKNF. Residues 911 to 939 lie on the Cytoplasmic side of the membrane; the sequence is DNSLFNLHGIPWGEWNFRYFLHTLVENKF. A helical membrane pass occupies residues 940–960; the sequence is LAWAIALAAVSVFPTIYIPVI. At 961-969 the chain is on the extracellular side; the sequence is NRDVFKHTY. The chain crosses the membrane as a helical span at residues 970–990; sequence IGWEWGVVAVAVMFYFFYVEI. The Cytoplasmic segment spans residues 991-1037; that stretch reads WKSIRRSLTNPQKKGKFRRTLSNTITTESKLSEKDLEHRLFLQSRRA. Ser-1012 is modified (phosphoserine).

The protein belongs to the cation transport ATPase (P-type) (TC 3.A.3) family. Type IID subfamily. The cofactor is Mg(2+). Post-translationally, the active site is phosphorylated in presence of sodium or potassium and in conditions of higher pH. Not phosphorylated in presence of calcium ions.

It is found in the cell membrane. It catalyses the reaction Na(+)(in) + ATP + H2O = Na(+)(out) + ADP + phosphate + H(+). It carries out the reaction K(+)(in) + ATP + H2O = K(+)(out) + ADP + phosphate + H(+). Functionally, catalyzes the hydrolysis of ATP coupled with the export of sodium and potassium from the cell. May export sodium less efficiently. May transport other cations such as lithium. Sodium/potassium efflux ATPases are involved in salt tolerance and maintaining the membrane potential across the plasma membrane in high salinity (Na+) or alkaline (K+) environments. The chain is Sodium/potassium exporting P-type ATPase cta3 from Schizosaccharomyces pombe (strain 972 / ATCC 24843) (Fission yeast).